Here is a 444-residue protein sequence, read N- to C-terminus: Chromosome partition protein MukF (444 aa).

Residues 212–240 (LDETSGNLRELQDTLNAAGDKLQAQLLRI) are leucine-zipper.

The protein belongs to the MukF family. As to quaternary structure, interacts, and probably forms a ternary complex, with MukE and MukB via its C-terminal region. The complex formation is stimulated by calcium or magnesium. It is required for an interaction between MukE and MukB.

It localises to the cytoplasm. It is found in the nucleoid. Functionally, involved in chromosome condensation, segregation and cell cycle progression. May participate in facilitating chromosome segregation by condensation DNA from both sides of a centrally located replisome during cell division. Not required for mini-F plasmid partitioning. Probably acts via its interaction with MukB and MukE. Overexpression results in anucleate cells. It has a calcium binding activity. In Haemophilus influenzae (strain PittGG), this protein is Chromosome partition protein MukF.